The following is a 581-amino-acid chain: Meiotic PUF family protein 1 (581 aa).

The PUM-HD domain occupies 225–580 (FPNGTTEPFE…RIAALVEKSK (356 aa)). 8 Pumilio repeats span residues 291–326 (TILP…SFSY), 327–362 (FLKK…NLIE), 363–398 (ELIE…GIFD), 403–438 (KMQG…TCLD), 439–474 (EIIN…RILN), 475–510 (SLLK…RYVK), 518–554 (ELPT…LMAE), and 555–581 (HLKK…KSKS).

In terms of biological role, RNA-binding protein essential for meiotic progression. The sequence is that of Meiotic PUF family protein 1 (mpf1) from Schizosaccharomyces pombe (strain 972 / ATCC 24843) (Fission yeast).